The chain runs to 311 residues: ADP-L-glycero-D-manno-heptose-6-epimerase (311 aa).

Residues Phe10–Ile11, Asp31–Asp32, Lys38, Lys53, Glu75–Ser79, and Asn92 contribute to the NADP(+) site. Tyr139 functions as the Proton acceptor in the catalytic mechanism. An NADP(+)-binding site is contributed by Lys143. Asn174 lines the substrate pocket. Positions 175 and 183 each coordinate NADP(+). Lys183 serves as the catalytic Proton acceptor. Residues Ser185, His192, Phe206 to Glu209, Arg212, and Tyr275 contribute to the substrate site.

Belongs to the NAD(P)-dependent epimerase/dehydratase family. HldD subfamily. Homopentamer. NADP(+) serves as cofactor.

It carries out the reaction ADP-D-glycero-beta-D-manno-heptose = ADP-L-glycero-beta-D-manno-heptose. It functions in the pathway nucleotide-sugar biosynthesis; ADP-L-glycero-beta-D-manno-heptose biosynthesis; ADP-L-glycero-beta-D-manno-heptose from D-glycero-beta-D-manno-heptose 7-phosphate: step 4/4. Catalyzes the interconversion between ADP-D-glycero-beta-D-manno-heptose and ADP-L-glycero-beta-D-manno-heptose via an epimerization at carbon 6 of the heptose. The sequence is that of ADP-L-glycero-D-manno-heptose-6-epimerase from Psychromonas ingrahamii (strain DSM 17664 / CCUG 51855 / 37).